Reading from the N-terminus, the 353-residue chain is Photosystem II D2 protein (353 aa).

Position 2 is an N-acetylthreonine (T2). At T2 the chain carries Phosphothreonine. The chain crosses the membrane as a helical span at residues 41–61 (CAYFALGGWFTGTTFVTSWYT). Chlorophyll a is bound at residue H118. The helical transmembrane segment at 125 to 141 (GFMLRQFELARSVQLRP) threads the bilayer. Pheophytin a-binding residues include Q130 and N143. The chain crosses the membrane as a helical span at residues 153–166 (VFVSVFLIYPLGQS). H198 lines the chlorophyll a pocket. Residues 208 to 228 (AALLCAIHGATVENTLFEDGD) form a helical membrane-spanning segment. A plastoquinone is bound by residues H215 and F262. H215 contacts Fe cation. Residue H269 participates in Fe cation binding. A helical transmembrane segment spans residues 279–295 (GLWMSALGVVGLALNLR).

It belongs to the reaction center PufL/M/PsbA/D family. As to quaternary structure, PSII is composed of 1 copy each of membrane proteins PsbA, PsbB, PsbC, PsbD, PsbE, PsbF, PsbH, PsbI, PsbJ, PsbK, PsbL, PsbM, PsbT, PsbX, PsbY, PsbZ, Psb30/Ycf12, at least 3 peripheral proteins of the oxygen-evolving complex and a large number of cofactors. It forms dimeric complexes. Requires The D1/D2 heterodimer binds P680, chlorophylls that are the primary electron donor of PSII, and subsequent electron acceptors. It shares a non-heme iron and each subunit binds pheophytin, quinone, additional chlorophylls, carotenoids and lipids. There is also a Cl(-1) ion associated with D1 and D2, which is required for oxygen evolution. The PSII complex binds additional chlorophylls, carotenoids and specific lipids. as cofactor.

It localises to the plastid. It is found in the chloroplast thylakoid membrane. The catalysed reaction is 2 a plastoquinone + 4 hnu + 2 H2O = 2 a plastoquinol + O2. In terms of biological role, photosystem II (PSII) is a light-driven water:plastoquinone oxidoreductase that uses light energy to abstract electrons from H(2)O, generating O(2) and a proton gradient subsequently used for ATP formation. It consists of a core antenna complex that captures photons, and an electron transfer chain that converts photonic excitation into a charge separation. The D1/D2 (PsbA/PsbD) reaction center heterodimer binds P680, the primary electron donor of PSII as well as several subsequent electron acceptors. D2 is needed for assembly of a stable PSII complex. This chain is Photosystem II D2 protein, found in Dioscorea elephantipes (Elephant's foot yam).